The following is a 403-amino-acid chain: NADH-quinone oxidoreductase subunit D (403 aa).

This sequence belongs to the complex I 49 kDa subunit family. As to quaternary structure, NDH-1 is composed of 14 different subunits. Subunits NuoB, C, D, E, F, and G constitute the peripheral sector of the complex.

The protein resides in the cell inner membrane. The enzyme catalyses a quinone + NADH + 5 H(+)(in) = a quinol + NAD(+) + 4 H(+)(out). NDH-1 shuttles electrons from NADH, via FMN and iron-sulfur (Fe-S) centers, to quinones in the respiratory chain. The immediate electron acceptor for the enzyme in this species is believed to be ubiquinone. Couples the redox reaction to proton translocation (for every two electrons transferred, four hydrogen ions are translocated across the cytoplasmic membrane), and thus conserves the redox energy in a proton gradient. The protein is NADH-quinone oxidoreductase subunit D of Pelobacter propionicus (strain DSM 2379 / NBRC 103807 / OttBd1).